The sequence spans 684 residues: Methionine--tRNA ligase (684 aa).

Positions 12 to 22 match the 'HIGH' region motif; the sequence is PYANGSIHLGH. Zn(2+) contacts are provided by C143, C146, C156, and C159. A 'KMSKS' region motif is present at residues 339-343; that stretch reads KMSKS. An ATP-binding site is contributed by K342. The tRNA-binding domain occupies 581-684; sequence DFMKIDMRVA…AGAQPGDKVG (104 aa).

It belongs to the class-I aminoacyl-tRNA synthetase family. MetG type 1 subfamily. Homodimer. Requires Zn(2+) as cofactor.

The protein resides in the cytoplasm. It carries out the reaction tRNA(Met) + L-methionine + ATP = L-methionyl-tRNA(Met) + AMP + diphosphate. Functionally, is required not only for elongation of protein synthesis but also for the initiation of all mRNA translation through initiator tRNA(fMet) aminoacylation. This is Methionine--tRNA ligase from Neisseria gonorrhoeae (strain ATCC 700825 / FA 1090).